The chain runs to 120 residues: UPF0102 protein PST_1070 (120 aa).

Belongs to the UPF0102 family.

The polypeptide is UPF0102 protein PST_1070 (Stutzerimonas stutzeri (strain A1501) (Pseudomonas stutzeri)).